A 111-amino-acid polypeptide reads, in one-letter code: Large ribosomal subunit protein eL31 (111 aa).

It belongs to the eukaryotic ribosomal protein eL31 family.

The polypeptide is Large ribosomal subunit protein eL31 (rpl31) (Dictyostelium discoideum (Social amoeba)).